The sequence spans 536 residues: Phosphoenolpyruvate carboxykinase (ATP) (536 aa).

Substrate is bound by residues Arg-63, Tyr-203, and Lys-209. Residues Lys-209, His-228, and 244–252 (GLSGTGKTT) each bind ATP. Positions 209 and 228 each coordinate Mn(2+). Asp-265 contacts Mn(2+). ATP-binding positions include Glu-293, Arg-329, 445–446 (RI), and Thr-451. Arg-329 contacts substrate.

It belongs to the phosphoenolpyruvate carboxykinase (ATP) family. Monomer. It depends on Mn(2+) as a cofactor.

It is found in the cytoplasm. The catalysed reaction is oxaloacetate + ATP = phosphoenolpyruvate + ADP + CO2. It functions in the pathway carbohydrate biosynthesis; gluconeogenesis. Its function is as follows. Involved in the gluconeogenesis. Catalyzes the conversion of oxaloacetate (OAA) to phosphoenolpyruvate (PEP) through direct phosphoryl transfer between the nucleoside triphosphate and OAA. This chain is Phosphoenolpyruvate carboxykinase (ATP), found in Colwellia psychrerythraea (strain 34H / ATCC BAA-681) (Vibrio psychroerythus).